A 399-amino-acid chain; its full sequence is Methylmalonic aciduria type A homolog, mitochondrial (399 aa).

Residues 1 to 15 constitute a mitochondrion transit peptide; that stretch reads MVVRSLLRVSRLTSA. Residues 131–139, Asp274, and 310–312 contribute to the GTP site; these read GSPGVGKSS and SIM.

This sequence belongs to the SIMIBI class G3E GTPase family. ArgK/MeaB subfamily.

Its subcellular location is the mitochondrion. Its function is as follows. May have GTPase activity. May also bind and hydrolyze ATP. May function as chaperone. Likely to have a role in propionyl-CoA and adenosylcobalamin metabolism. The protein is Methylmalonic aciduria type A homolog, mitochondrial (mmaa-1) of Caenorhabditis elegans.